The chain runs to 338 residues: Phenylalanine--tRNA ligase alpha subunit (338 aa).

Glutamate 252 contributes to the Mg(2+) binding site.

It belongs to the class-II aminoacyl-tRNA synthetase family. Phe-tRNA synthetase alpha subunit type 1 subfamily. As to quaternary structure, tetramer of two alpha and two beta subunits. Requires Mg(2+) as cofactor.

The protein resides in the cytoplasm. The enzyme catalyses tRNA(Phe) + L-phenylalanine + ATP = L-phenylalanyl-tRNA(Phe) + AMP + diphosphate + H(+). This Mycoplasmoides gallisepticum (strain R(low / passage 15 / clone 2)) (Mycoplasma gallisepticum) protein is Phenylalanine--tRNA ligase alpha subunit.